We begin with the raw amino-acid sequence, 111 residues long: Large ribosomal subunit protein P2-2 (111 aa).

The tract at residues 86 to 111 is disordered; that stretch reads APAAAAAKKDEPEEEADDDMGFGLFD.

This sequence belongs to the eukaryotic ribosomal protein P1/P2 family. P1 and P2 exist as dimers at the large ribosomal subunit. Phosphorylated.

Functionally, plays an important role in the elongation step of protein synthesis. The sequence is that of Large ribosomal subunit protein P2-2 (LIP') from Leishmania infantum.